A 414-amino-acid polypeptide reads, in one-letter code: MAEEMEETHCMALNVENFKACAKIHNHVKNYLKKGLVQIVGFETEPVFQIMATACDGGILVFKVLNPFESFNVSYSRMETLSLSFKNQPHGNTYLYSKDLFGEAVKGASLTFLQRPGLCRPDFVRSDVLMDDDVTTSSHCTSLTSWSPPAHDIRAGTVMSKVVLSIKTCTMLQKWLKDQKSKGEPRCVRLCLNEILSVLVLSVGEASKTVHLKPVEGNPATSLLFADKQGDVCIISDDEAHDVSLDSLLAALGVCRIPALCLPCFNFHSNGVLEVVGLQFKSSKPASGELSVFLLRANPQVDFNGVPEGDVQTQEVSSVASTCRHLSESCSLDPPRTPELPGSPDTFKEIPGRSGSVHLERDLSCSDSEEETPKQKPAKAKPAAAPKRSEKRKREGGKKGPKAKSLKLTFNPLI.

Positions 327–414 (SESCSLDPPR…SLKLTFNPLI (88 aa)) are disordered. Positions 389–405 (SEKRKREGGKKGPKAKS) are enriched in basic residues.

It belongs to the herpesviridae DNA polymerase accessory subunit family.

In terms of biological role, increases the processivity of the viral polymerase, probably by acting as a sliding clamp that prevents dissociation of the polymerase from the active template. This Equine herpesvirus 2 (strain 86/87) (EHV-2) protein is DNA polymerase processivity factor (59).